A 732-amino-acid chain; its full sequence is Catalase-peroxidase (732 aa).

Positions 1-24 (MDAKTDDNSAGKCPVAHGSAGRTN) are disordered. A cross-link (tryptophyl-tyrosyl-methioninium (Trp-Tyr) (with M-245)) is located at residues 96–219 (WHSAGTYRIA…LGAVQMGLIY (124 aa)). H97 serves as the catalytic Proton acceptor. The tryptophyl-tyrosyl-methioninium (Tyr-Met) (with W-96) cross-link spans 219–245 (YVNPEGPNGNPDPLAAARDIRDTFARM). H260 contacts heme b.

The protein belongs to the peroxidase family. Peroxidase/catalase subfamily. In terms of assembly, homodimer or homotetramer. Requires heme b as cofactor. Formation of the three residue Trp-Tyr-Met cross-link is important for the catalase, but not the peroxidase activity of the enzyme.

The catalysed reaction is H2O2 + AH2 = A + 2 H2O. It catalyses the reaction 2 H2O2 = O2 + 2 H2O. In terms of biological role, bifunctional enzyme with both catalase and broad-spectrum peroxidase activity. This is Catalase-peroxidase from Mesorhizobium japonicum (strain LMG 29417 / CECT 9101 / MAFF 303099) (Mesorhizobium loti (strain MAFF 303099)).